The chain runs to 614 residues: Sodium- and chloride-dependent betaine transporter (614 aa).

The Cytoplasmic portion of the chain corresponds to 1-44 (MDGKVAVQECGPPAVSWVPEEGEKLDQEDEDQVKDRGQWTNKME). 3 helical membrane-spanning segments follow: residues 45–65 (FVLS…FPYL), 73–92 (AFFI…VFFL), and 117–137 (GIGL…IIIL). Topologically, residues 138–210 (AWALFYLFSS…SGIHDLGSLR (73 aa)) are extracellular. A disulfide bridge connects residues Cys-157 and Cys-166. N-linked (GlcNAc...) asparagine glycosylation is found at Asn-171 and Asn-183. The next 9 membrane-spanning stretches (helical) occupy residues 211–229 (WELA…FCIW), 238–255 (VVYF…ILLI), 291–308 (IFFS…LGSY), 320–341 (IALC…FSIL), 374–393 (MPLS…FLGL), 423–441 (LLIL…FLVT), 458–478 (GICL…VYGA), 499–518 (ISWL…FSLS), and 538–556 (IGWF…FVVI). At 557 to 614 (TLLKTRGPFRKRLRQLITPDSSLPQPKQHPCLDGSAGRNFGPSPTREGLIAGEKETHL) the chain is on the cytoplasmic side. The interval 576 to 614 (DSSLPQPKQHPCLDGSAGRNFGPSPTREGLIAGEKETHL) is disordered.

The protein belongs to the sodium:neurotransmitter symporter (SNF) (TC 2.A.22) family. SLC6A12 subfamily. In terms of assembly, interacts with LIN7C. Expressed in kidney, liver, heart, skeletal muscle, placenta, and a widespread distribution in the brain.

Its subcellular location is the basolateral cell membrane. It is found in the cell membrane. The catalysed reaction is 4-aminobutanoate(out) + chloride(out) + 3 Na(+)(out) = 4-aminobutanoate(in) + chloride(in) + 3 Na(+)(in). It catalyses the reaction glycine betaine(out) + 2 chloride(out) + 3 Na(+)(out) = glycine betaine(in) + 2 chloride(in) + 3 Na(+)(in). Its function is as follows. Transporter that mediates cellular uptake of betaine and GABA in a sodium- and chloride-dependent process. May have a role in regulation of GABAergic transmission in the brain through the reuptake of GABA into presynaptic terminals, as well as in osmotic regulation. Probably also involved in renal and hepatic osmotic regulation. The chain is Sodium- and chloride-dependent betaine transporter from Homo sapiens (Human).